A 388-amino-acid chain; its full sequence is Leucine aminopeptidase 1 (388 aa).

The first 19 residues, 1–19 (MRVLAAIALGATGLRGALA), serve as a signal peptide directing secretion. The propeptide occupies 20 to 88 (AVVPQEVLGT…YPTLNSASYV (69 aa)). Residues N106 and N180 are each glycosylated (N-linked (GlcNAc...) asparagine). Zn(2+) is bound by residues H188 and D207. A glycan (N-linked (GlcNAc...) asparagine) is linked at N232. E246 and D273 together coordinate Zn(2+). C322 and C326 are joined by a disulfide. H355 provides a ligand contact to Zn(2+).

The protein belongs to the peptidase M28 family. M28E subfamily. In terms of assembly, monomer. Zn(2+) serves as cofactor.

Its subcellular location is the secreted. Extracellular aminopeptidase that allows assimilation of proteinaceous substrates. The chain is Leucine aminopeptidase 1 (lap1) from Aspergillus clavatus (strain ATCC 1007 / CBS 513.65 / DSM 816 / NCTC 3887 / NRRL 1 / QM 1276 / 107).